Reading from the N-terminus, the 200-residue chain is 3-isopropylmalate dehydratase small subunit (200 aa).

The protein belongs to the LeuD family. LeuD type 1 subfamily. As to quaternary structure, heterodimer of LeuC and LeuD.

The enzyme catalyses (2R,3S)-3-isopropylmalate = (2S)-2-isopropylmalate. It participates in amino-acid biosynthesis; L-leucine biosynthesis; L-leucine from 3-methyl-2-oxobutanoate: step 2/4. In terms of biological role, catalyzes the isomerization between 2-isopropylmalate and 3-isopropylmalate, via the formation of 2-isopropylmaleate. The sequence is that of 3-isopropylmalate dehydratase small subunit from Pseudarthrobacter chlorophenolicus (strain ATCC 700700 / DSM 12829 / CIP 107037 / JCM 12360 / KCTC 9906 / NCIMB 13794 / A6) (Arthrobacter chlorophenolicus).